A 392-amino-acid chain; its full sequence is Heat-inducible transcription repressor HrcA (392 aa).

This sequence belongs to the HrcA family.

Its function is as follows. Negative regulator of class I heat shock genes (grpE-dnaK-dnaJ and groELS operons). Prevents heat-shock induction of these operons. The sequence is that of Heat-inducible transcription repressor HrcA from Chlamydia trachomatis serovar L2 (strain ATCC VR-902B / DSM 19102 / 434/Bu).